A 214-amino-acid chain; its full sequence is Uridine kinase (214 aa).

11–18 is a binding site for ATP; sequence GGSGSGKT.

This sequence belongs to the uridine kinase family.

The protein localises to the cytoplasm. It catalyses the reaction uridine + ATP = UMP + ADP + H(+). The enzyme catalyses cytidine + ATP = CMP + ADP + H(+). It participates in pyrimidine metabolism; CTP biosynthesis via salvage pathway; CTP from cytidine: step 1/3. The protein operates within pyrimidine metabolism; UMP biosynthesis via salvage pathway; UMP from uridine: step 1/1. In Brevibacillus brevis (strain 47 / JCM 6285 / NBRC 100599), this protein is Uridine kinase.